We begin with the raw amino-acid sequence, 229 residues long: Large ribosomal subunit protein uL1 (229 aa).

Belongs to the universal ribosomal protein uL1 family. In terms of assembly, part of the 50S ribosomal subunit.

Binds directly to 23S rRNA. The L1 stalk is quite mobile in the ribosome, and is involved in E site tRNA release. In terms of biological role, protein L1 is also a translational repressor protein, it controls the translation of the L11 operon by binding to its mRNA. This chain is Large ribosomal subunit protein uL1, found in Rhodopseudomonas palustris (strain HaA2).